Reading from the N-terminus, the 213-residue chain is ATP phosphoribosyltransferase (213 aa).

This sequence belongs to the ATP phosphoribosyltransferase family. Short subfamily. As to quaternary structure, heteromultimer composed of HisG and HisZ subunits.

The protein localises to the cytoplasm. The enzyme catalyses 1-(5-phospho-beta-D-ribosyl)-ATP + diphosphate = 5-phospho-alpha-D-ribose 1-diphosphate + ATP. Its pathway is amino-acid biosynthesis; L-histidine biosynthesis; L-histidine from 5-phospho-alpha-D-ribose 1-diphosphate: step 1/9. Its function is as follows. Catalyzes the condensation of ATP and 5-phosphoribose 1-diphosphate to form N'-(5'-phosphoribosyl)-ATP (PR-ATP). Has a crucial role in the pathway because the rate of histidine biosynthesis seems to be controlled primarily by regulation of HisG enzymatic activity. The chain is ATP phosphoribosyltransferase from Bacillus velezensis (strain DSM 23117 / BGSC 10A6 / LMG 26770 / FZB42) (Bacillus amyloliquefaciens subsp. plantarum).